We begin with the raw amino-acid sequence, 312 residues long: Probable N-glycosylase/DNA lyase (312 aa).

A disordered region spans residues 1-22; the sequence is MRIPVGDFDLEMTQRSGQTSQP. Over residues 13 to 22 the composition is skewed to polar residues; that stretch reads TQRSGQTSQP. The active site involves lysine 235.

The protein belongs to the type-1 OGG1 family.

The catalysed reaction is 2'-deoxyribonucleotide-(2'-deoxyribose 5'-phosphate)-2'-deoxyribonucleotide-DNA = a 3'-end 2'-deoxyribonucleotide-(2,3-dehydro-2,3-deoxyribose 5'-phosphate)-DNA + a 5'-end 5'-phospho-2'-deoxyribonucleoside-DNA + H(+). DNA repair enzyme that incises DNA at 8-oxoG residues. Excises 7,8-dihydro-8-oxoguanine and 2,6-diamino-4-hydroxy-5-N-methylformamidopyrimidine (FAPY) from damaged DNA. Has a beta-lyase activity that nicks DNA 3' to the lesion. In Methanothermobacter thermautotrophicus (strain ATCC 29096 / DSM 1053 / JCM 10044 / NBRC 100330 / Delta H) (Methanobacterium thermoautotrophicum), this protein is Probable N-glycosylase/DNA lyase.